Reading from the N-terminus, the 321-residue chain is Protein FAM110C (321 aa).

Disordered regions lie at residues 1–84 (MRAL…APAP) and 111–203 (RGSG…SQSD). Composition is skewed to basic and acidic residues over residues 15–46 (LLPR…DRAK) and 131–145 (GKDK…DEGK). The segment covering 169-181 (APAARSAAPSSVP) has biased composition (low complexity). Position 241 is a phosphoserine (Ser-241).

It belongs to the FAM110 family. Interacts with AKT1; the interaction is transient and follows AKT1 activation. Interacts with PPP2CA and alpha-tubulin. As to expression, detected in stomach, thyroid, trachea, adrenal gland and testis, and at low levels in prostate, ovary, intestine, colon, spinal cord and lymph node.

The protein resides in the cytoplasm. The protein localises to the cytoskeleton. Its subcellular location is the microtubule organizing center. It localises to the centrosome. It is found in the spindle pole. The protein resides in the nucleus. Functionally, may play a role in microtubule organization. May play a role in cell spreading and cell migration of epithelial cells; the function may involve the AKT1 signaling pathway. The sequence is that of Protein FAM110C (FAM110C) from Homo sapiens (Human).